Here is a 338-residue protein sequence, read N- to C-terminus: Anthranilate phosphoribosyltransferase (338 aa).

Residues Gly81, 84–85 (GD), Thr89, 91–94 (NIST), 109–117 (KHGNRNLSS), and Ala121 contribute to the 5-phospho-alpha-D-ribose 1-diphosphate site. Gly81 serves as a coordination point for anthranilate. A Mg(2+)-binding site is contributed by Ser93. Asn112 provides a ligand contact to anthranilate. Arg167 contacts anthranilate. Residues Asp226 and Glu227 each coordinate Mg(2+).

It belongs to the anthranilate phosphoribosyltransferase family. In terms of assembly, homodimer. Requires Mg(2+) as cofactor.

It carries out the reaction N-(5-phospho-beta-D-ribosyl)anthranilate + diphosphate = 5-phospho-alpha-D-ribose 1-diphosphate + anthranilate. Its pathway is amino-acid biosynthesis; L-tryptophan biosynthesis; L-tryptophan from chorismate: step 2/5. Its function is as follows. Catalyzes the transfer of the phosphoribosyl group of 5-phosphorylribose-1-pyrophosphate (PRPP) to anthranilate to yield N-(5'-phosphoribosyl)-anthranilate (PRA). In Cereibacter sphaeroides (strain KD131 / KCTC 12085) (Rhodobacter sphaeroides), this protein is Anthranilate phosphoribosyltransferase.